The primary structure comprises 291 residues: Bifunctional protein FolD (291 aa).

Residues 171–173 (GVS) and Ile239 each bind NADP(+).

The protein belongs to the tetrahydrofolate dehydrogenase/cyclohydrolase family. Homodimer.

The catalysed reaction is (6R)-5,10-methylene-5,6,7,8-tetrahydrofolate + NADP(+) = (6R)-5,10-methenyltetrahydrofolate + NADPH. It catalyses the reaction (6R)-5,10-methenyltetrahydrofolate + H2O = (6R)-10-formyltetrahydrofolate + H(+). Its pathway is one-carbon metabolism; tetrahydrofolate interconversion. Functionally, catalyzes the oxidation of 5,10-methylenetetrahydrofolate to 5,10-methenyltetrahydrofolate and then the hydrolysis of 5,10-methenyltetrahydrofolate to 10-formyltetrahydrofolate. The chain is Bifunctional protein FolD from Xylella fastidiosa (strain Temecula1 / ATCC 700964).